Reading from the N-terminus, the 362-residue chain is 3-dehydroquinate synthase (362 aa).

Residues 71-76, 105-109, 129-130, lysine 142, lysine 151, and 169-172 each bind NAD(+); these read DGEQYK, GVVGD, TT, and CLNT. Zn(2+) is bound by residues glutamate 184, histidine 247, and histidine 264.

The protein belongs to the sugar phosphate cyclases superfamily. Dehydroquinate synthase family. Co(2+) is required as a cofactor. The cofactor is Zn(2+). NAD(+) serves as cofactor.

It is found in the cytoplasm. It carries out the reaction 7-phospho-2-dehydro-3-deoxy-D-arabino-heptonate = 3-dehydroquinate + phosphate. It participates in metabolic intermediate biosynthesis; chorismate biosynthesis; chorismate from D-erythrose 4-phosphate and phosphoenolpyruvate: step 2/7. Its function is as follows. Catalyzes the conversion of 3-deoxy-D-arabino-heptulosonate 7-phosphate (DAHP) to dehydroquinate (DHQ). The chain is 3-dehydroquinate synthase from Enterobacter sp. (strain 638).